The chain runs to 251 residues: MSANELPSSAQAFQEQFLGGFVSRKLLLHNPFDHNTQRAFAVAPSPLITHENNLSGNVMMLLSILICGIICCLGLHYIIRCALRRSTRFMISEPVPSLSSTRGSSNKGIKKKALRMFPVVSYSPEMNLPGLDEECVICLSDFVSGEQLRLLPKCNHGFHVRCIDKWLQQHLTCPKCRNCLVETCQKILGDFSQADSVTAEPTEIVIVTIVPLEPTEIVIVTIAPLEPTEIVIVMIAPLEPEGRVNTIREIS.

The chain crosses the membrane as a helical span at residues 59–79 (MMLLSILICGIICCLGLHYII). The RING-type; atypical zinc-finger motif lies at 135–177 (CVICLSDFVSGEQLRLLPKCNHGFHVRCIDKWLQQHLTCPKCR).

This sequence belongs to the RING-type zinc finger family. ATL subfamily.

Its subcellular location is the membrane. It carries out the reaction S-ubiquitinyl-[E2 ubiquitin-conjugating enzyme]-L-cysteine + [acceptor protein]-L-lysine = [E2 ubiquitin-conjugating enzyme]-L-cysteine + N(6)-ubiquitinyl-[acceptor protein]-L-lysine.. Its pathway is protein modification; protein ubiquitination. In Arabidopsis thaliana (Mouse-ear cress), this protein is RING-H2 finger protein ATL10 (ATL10).